The primary structure comprises 880 residues: DNA-directed RNA polymerase subunit Rpo1N (880 aa).

Residues C58, C61, C68, and H71 each contribute to the Zn(2+) site. DsDNA-binding positions include K88 and 92–95 (EFLK). C98 and C101 together coordinate Zn(2+). K138 is a binding site for dsDNA. Positions 146 and 149 each coordinate Zn(2+). Residues K303, 305–310 (KEGRFR), R323, and Q422 contribute to the dsDNA site. Residues D456, D458, and D460 each contribute to the Mg(2+) site. Zn(2+)-binding residues include R573, C575, C580, and H582. DsDNA contacts are provided by residues 812–822 (RTSQSGYMQRR) and Q815.

Belongs to the RNA polymerase beta' chain family. Part of the 13-subunit RNA polymerase complex. Rpo1N and Rpo5 form a cleft which docks Rpo13. Interacts with Rpo8 on the periphery of the clamp head. Mg(2+) is required as a cofactor. Requires Zn(2+) as cofactor.

The protein resides in the cytoplasm. It carries out the reaction RNA(n) + a ribonucleoside 5'-triphosphate = RNA(n+1) + diphosphate. Functionally, DNA-dependent RNA polymerase (RNAP) catalyzes the transcription of DNA into RNA using the four ribonucleoside triphosphates as substrates. Forms the clamp head domain. This chain is DNA-directed RNA polymerase subunit Rpo1N, found in Saccharolobus shibatae (strain ATCC 51178 / DSM 5389 / JCM 8931 / NBRC 15437 / B12) (Sulfolobus shibatae).